Here is a 233-residue protein sequence, read N- to C-terminus: Opacity protein opA67 (233 aa).

Residue Ala-1 is a signal peptide.

The protein belongs to the opacity porin family.

It is found in the cell outer membrane. Functionally, implicated in a number of adherence functions. OPA proteins are implicated in pathogenesis and are subject to phase variation. This is Opacity protein opA67 from Neisseria gonorrhoeae.